Reading from the N-terminus, the 163-residue chain is Peptidyl-prolyl cis-trans isomerase (163 aa).

The PPIase cyclophilin-type domain maps to 17 to 163 (KTAYATIKTN…IESVVFSSSL (147 aa)).

The protein belongs to the cyclophilin-type PPIase family.

The catalysed reaction is [protein]-peptidylproline (omega=180) = [protein]-peptidylproline (omega=0). Its function is as follows. PPIases accelerate the folding of proteins. It catalyzes the cis-trans isomerization of proline imidic peptide bonds in oligopeptides. The chain is Peptidyl-prolyl cis-trans isomerase (ppiA) from Helicobacter pylori (strain ATCC 700392 / 26695) (Campylobacter pylori).